We begin with the raw amino-acid sequence, 434 residues long: Alpha-enolase (434 aa).

Ser40 contacts Mg(2+). Residues His158 and Glu167 each contribute to the substrate site. The Proton donor role is filled by Glu210. Residues Asp245, Glu293, and Asp318 each contribute to the Mg(2+) site. Substrate is bound by residues Glu293 and Asp318. Catalysis depends on Lys343, which acts as the Proton acceptor. Substrate is bound by residues 370–373 and Lys394; that span reads SHRS.

This sequence belongs to the enolase family. Homodimer. Requires Mg(2+) as cofactor.

The protein resides in the cytoplasm. It catalyses the reaction (2R)-2-phosphoglycerate = phosphoenolpyruvate + H2O. The protein operates within carbohydrate degradation; glycolysis; pyruvate from D-glyceraldehyde 3-phosphate: step 4/5. The sequence is that of Alpha-enolase from Alligator mississippiensis (American alligator).